Consider the following 102-residue polypeptide: MHIKKGDKVIVITGKDKGKTGTVIEALPKRDRVVVEGVNIVKKHQKPTQMNPEGGITEFEAAIHVSNVMLLDPKTNKPTRVGTKIEDGKKVRVAKKSGEIIK.

Belongs to the universal ribosomal protein uL24 family. As to quaternary structure, part of the 50S ribosomal subunit.

In terms of biological role, one of two assembly initiator proteins, it binds directly to the 5'-end of the 23S rRNA, where it nucleates assembly of the 50S subunit. One of the proteins that surrounds the polypeptide exit tunnel on the outside of the subunit. The chain is Large ribosomal subunit protein uL24 from Macrococcus caseolyticus (strain JCSC5402) (Macrococcoides caseolyticum).